The chain runs to 302 residues: Decaprenyl-phosphate phosphoribosyltransferase (302 aa).

Residue lysine 28 coordinates 5-phospho-alpha-D-ribose 1-diphosphate. Helical transmembrane passes span 30–50 (VLVL…DYVE) and 55–75 (VSMA…VNDV). Tyrosine 70 contributes to the 5-phospho-alpha-D-ribose 1-diphosphate binding site. Mg(2+) contacts are provided by asparagine 73 and aspartate 77. Residue lysine 87 participates in 5-phospho-alpha-D-ribose 1-diphosphate binding. The next 2 membrane-spanning stretches (helical) occupy residues 100 to 120 (WLAY…AWML) and 122 to 142 (PNLA…CFGL). 5-phospho-alpha-D-ribose 1-diphosphate-binding residues include lysine 143 and arginine 160. The next 2 membrane-spanning stretches (helical) occupy residues 146–166 (AVVE…AGGV) and 170–190 (IPLS…MVAG). Lysine 191 provides a ligand contact to trans,octa-cis-decaprenyl phosphate. Helical transmembrane passes span 218-238 (LRFV…LWAF), 244-264 (SGSW…RYAV), and 282-302 (RVLQ…VAFG).

This sequence belongs to the UbiA prenyltransferase family. DPPR synthase subfamily. As to quaternary structure, homotrimer. Requires Mg(2+) as cofactor.

The protein resides in the cell inner membrane. The catalysed reaction is trans,octa-cis-decaprenyl phosphate + 5-phospho-alpha-D-ribose 1-diphosphate + H(+) = trans,octa-cis-decaprenylphospho-beta-D-ribofuranose 5-phosphate + diphosphate. It participates in cell wall biogenesis; cell wall polysaccharide biosynthesis. In terms of biological role, involved in the biosynthesis of decaprenylphosphoryl arabinose (DPA) a precursor for arabinan synthesis in mycobacterial cell wall biosynthesis. Catalyzes the transfer of a 5-phosphoribosyl residue from phosphoribose diphosphate (PRPP) to decaprenyl phosphate (DP) to form decaprenylphosphoryl-5-phosphoribose (DPPR). The chain is Decaprenyl-phosphate phosphoribosyltransferase from Mycobacterium tuberculosis (strain CDC 1551 / Oshkosh).